The chain runs to 497 residues: MEIVIRTGSGDVRGSKENGIAVFRGIPYAEPPVGAHRFTAPRPPRPWDGVRDATEFSATAPRPPYPEAIGALLIERFIPGDDYLTLNVWTPDPNAVGLPVMVWIHGGAFTNGSGSEPVYDGAAFARDGVVFVSFNYRLGIIGFADLPDAPSNRGLLDQIAALEWVRDNIARFGGDPGNVTVFGESAGAMSVCTLMATPRARGLFRRAILQSGAGNMAVAAEDATTIAAVIAHRLGVEPTAAALAHVPVAQLLDVQQQVAQEIQGAPDPAVWGERIAGGSVLLPFAPVIDGELLSQRPAEAIAGGAGHDVDLLFGTTTDEYRLFLAPTGLLPFITGDYVTTHLAKSGLDADAAKAYTAEGRGEEPGDILASIITDQVFRIPALRIAESRVDAPARTFGYEFAWRTPQLDGILGACHAVELPFVFRTLDRAASLVGTNPPEELAETVHNAWVRFATSGDPGWPAWNPETRSVMRFDHPVSEMVTDPYPATRALWDGVPL.

The Acyl-ester intermediate role is filled by Ser185. Residues Glu319 and His415 each act as charge relay system in the active site.

This sequence belongs to the type-B carboxylesterase/lipase family.

Its subcellular location is the secreted. It catalyses the reaction a carboxylic ester + H2O = an alcohol + a carboxylate + H(+). The polypeptide is Carboxylesterase (Thermobifida fusca (strain YX)).